The chain runs to 190 residues: dCTP deaminase (190 aa).

A dCTP-binding site is contributed by 113 to 118 (KSTYAR). The active-site Proton donor/acceptor is Glu139. Residues Gln158, Tyr172, Lys181, and Gln182 each contribute to the dCTP site.

The protein belongs to the dCTP deaminase family. In terms of assembly, homotrimer.

The catalysed reaction is dCTP + H2O + H(+) = dUTP + NH4(+). Its pathway is pyrimidine metabolism; dUMP biosynthesis; dUMP from dCTP (dUTP route): step 1/2. Its function is as follows. Catalyzes the deamination of dCTP to dUTP. This is dCTP deaminase from Chlamydia pneumoniae (Chlamydophila pneumoniae).